Consider the following 1090-residue polypeptide: MTSGDLSSVLNILRSLYKRTRTLEEFADGVVFREGRRAALLQPSDTHSFKSFVRGVFVCSDEELQDVPSCNQTCTFPELLAFILNSLKRKRRRNVLAHGYNFLGVAQEDRDADHFRFQGDLSQSAAYIHSSDLWKKVTARLGTDVTRYLLGSCSVFVLAPPSCVFQICGVPAYDRVSMTTASSGFLLRPPSRKHKSFQVGKKTRSANLTKTGSVGDVEESRKRRRVESEVSTRKRKRESEEEESRERRRGVHHEERRQHEAVLDESTLSGKSGENDAAAVKPPPETSAAPPPLEGGPSWRSGAFPPLPSSQCFIRTLGFLYGGRGMHGFCLNRKRRTAAGPRRLQGQDLVRLVFFEGLPYLNGQERKPKKLPLRYFNMVPVFGRLLQRHRKCRYSSVLHRMCPVVELSRAAQGELSSLIPQHCAPHRVYLFVRECLTAVVPEELWGSDHNRLQFFSRVRGFLKSGKFERISVAELMWKIKVMDCDWLKLRRTAGRFPPSELAYRTRILSQFLTWLLDGFVVGLVRACFYATESVGQKNAIRFYRQEVWSKLQDLAFRRHIAKGEMEELSPAQVASLPKGTVISQLRFIPKTDGMRPITRVIGADSNTRLHHKRIRDLMSMLQARVRSAPALLGSTVWGMTDIHKVLRSLAPAQKDKPQPLYFVKVDVSGAYDSLPHDKLKEVITEALSPVQEEVFTVRHYAKIWADSHEGLKKAFARQVDFSDGSMGSTSMKGFVMSLQKSSKVHHAVLVEQAFGSNLRGKDALQFFTQMLTGSVVQHGKKTYRQCRGIPQGSVVSSLLCCLCYGHMENVLFRDIKNKGWLMRLVDDFLLITPDRNQAQSFLSILLAGVPQYGVVANPQKVVVNFQGSEGGGAFPDIRVLPPHCLFPWCGLLLDTRSLDVCKDYSSYAGLSLRYSLTLGSAHSAGQQMRRKLMSILRIKCHPLFLDLKTNSLESAYKNIHKLVLLQACRFHVCVQSLPFAQTVAKNPTYFQQMIWDMAHYANALIRRSNTGLVLGDGAQKGSVQYEAVELLFCLAFLRVLSKHRPVYKDLLPRLHKWKRRLERLLGDLRLARVRQAANPRALLDFLAMQM.

Residues 184 to 301 (GFLLRPPSRK…PLEGGPSWRS (118 aa)) are disordered. Basic residues predominate over residues 190-204 (PSRKHKSFQVGKKTR). 2 stretches are compositionally biased toward basic and acidic residues: residues 218–232 (EESR…EVST) and 252–262 (HHEERRQHEAV). Residues 281-294 (KPPPETSAAPPPLE) are compositionally biased toward pro residues. A TFLY; involved in RNA binding motif is present at residues 316 to 321 (TLGFLY). Interaction with RNA template stretches follow at residues 371-376 (LPLRYF) and 477-503 (WKIK…ELAY). The 325-residue stretch at 569-893 (SPAQVASLPK…CLFPWCGLLL (325 aa)) folds into the Reverse transcriptase domain. Residues Asp666, Asp826, and Asp827 each contribute to the Mg(2+) site.

This sequence belongs to the reverse transcriptase family. Telomerase subfamily. As to quaternary structure, catalytic subunit of the telomerase holoenzyme complex composed minimally of TERT and the telomerase RNA template component (TERC). In terms of tissue distribution, expressed at highest levels in gonads and brain, and at lower levels in heart, spleen, kidney, gill, muscle and skin. Detected in embryonic stem cell lines before and after differentiation. Isoform F is expressed in gonads, with higher levels in testis relative to ovary, but is not detected in other tissues. Isoform B is expressed predominantly in testis. Isoform C is up-regulated in embryonic stem cell lines after differentiation.

It localises to the nucleus. Its subcellular location is the chromosome. The protein localises to the telomere. It carries out the reaction DNA(n) + a 2'-deoxyribonucleoside 5'-triphosphate = DNA(n+1) + diphosphate. Functionally, telomerase is a ribonucleoprotein enzyme essential for the replication of chromosome termini in most eukaryotes. It elongates telomeres. It is a reverse transcriptase that adds simple sequence repeats to chromosome ends by copying a template sequence within the RNA component of the enzyme. This Oryzias latipes (Japanese rice fish) protein is Telomerase reverse transcriptase.